The sequence spans 132 residues: Small ribosomal subunit protein uS8 (132 aa).

Belongs to the universal ribosomal protein uS8 family. As to quaternary structure, part of the 30S ribosomal subunit. Contacts proteins S5 and S12.

Functionally, one of the primary rRNA binding proteins, it binds directly to 16S rRNA central domain where it helps coordinate assembly of the platform of the 30S subunit. This is Small ribosomal subunit protein uS8 from Shouchella clausii (strain KSM-K16) (Alkalihalobacillus clausii).